The chain runs to 103 residues: Small ribosomal subunit protein uS10 (103 aa).

The protein belongs to the universal ribosomal protein uS10 family. As to quaternary structure, part of the 30S ribosomal subunit.

Functionally, involved in the binding of tRNA to the ribosomes. The protein is Small ribosomal subunit protein uS10 of Saccharophagus degradans (strain 2-40 / ATCC 43961 / DSM 17024).